Reading from the N-terminus, the 771-residue chain is Probable dipeptidyl peptidase 4 (771 aa).

An N-terminal signal peptide occupies residues 1–16; that stretch reads MKYSKLLLLLVSVVQA. 7 N-linked (GlcNAc...) asparagine glycosylation sites follow: Asn-37, Asn-80, Asn-114, Asn-173, Asn-222, Asn-470, and Asn-495. Active-site charge relay system residues include Ser-618, Asp-695, and His-730.

The protein belongs to the peptidase S9B family.

Its subcellular location is the secreted. The catalysed reaction is Release of an N-terminal dipeptide, Xaa-Yaa-|-Zaa-, from a polypeptide, preferentially when Yaa is Pro, provided Zaa is neither Pro nor hydroxyproline.. Extracellular dipeptidyl-peptidase which removes N-terminal dipeptides sequentially from polypeptides having unsubstituted N-termini provided that the penultimate residue is proline. The sequence is that of Probable dipeptidyl peptidase 4 (dpp4) from Aspergillus flavus (strain ATCC 200026 / FGSC A1120 / IAM 13836 / NRRL 3357 / JCM 12722 / SRRC 167).